Here is a 310-residue protein sequence, read N- to C-terminus: Protease HtpX homolog (310 aa).

2 helical membrane-spanning segments follow: residues 7–27 (SVMLLTAMTAFLLIVGQLIGG) and 29–49 (AGMTFALIMAVGMNFFSYWYS). His-131 serves as a coordination point for Zn(2+). Residue Glu-132 is part of the active site. His-135 lines the Zn(2+) pocket. 2 helical membrane-spanning segments follow: residues 141 to 161 (ILIGTIAATMAGAVMFLASMA) and 178 to 198 (PLGFAGMLIMAILAPIGAALI). Glu-207 contributes to the Zn(2+) binding site. The segment at 277–310 (LTGARPQSGGAPSGPERTARNAEDSAKDFWDSLK) is disordered. Residues 293 to 310 (RTARNAEDSAKDFWDSLK) are compositionally biased toward basic and acidic residues.

This sequence belongs to the peptidase M48B family. It depends on Zn(2+) as a cofactor.

It is found in the cell inner membrane. The polypeptide is Protease HtpX homolog (Desulfatibacillum aliphaticivorans).